Here is a 245-residue protein sequence, read N- to C-terminus: 5'-nucleotidase SurE (245 aa).

Positions 8, 9, 39, and 91 each coordinate a divalent metal cation.

It belongs to the SurE nucleotidase family. The cofactor is a divalent metal cation.

It localises to the cytoplasm. It catalyses the reaction a ribonucleoside 5'-phosphate + H2O = a ribonucleoside + phosphate. In terms of biological role, nucleotidase that shows phosphatase activity on nucleoside 5'-monophosphates. The chain is 5'-nucleotidase SurE from Janthinobacterium sp. (strain Marseille) (Minibacterium massiliensis).